A 486-amino-acid chain; its full sequence is Vacuolar-processing enzyme beta-isozyme (486 aa).

The signal sequence occupies residues 1–21 (MAKSCYFRPALLLLLVLLVHA). His-169 is a catalytic residue. Catalysis depends on Cys-211, which acts as the Nucleophile. Cys-244 and Cys-258 form a disulfide bridge. Residue Asn-309 is glycosylated (N-linked (GlcNAc...) asparagine). Cystine bridges form between Cys-420/Cys-450 and Cys-432/Cys-467.

It belongs to the peptidase C13 family. Auto-catalytic activation. As to expression, seed specific. Also expressed in the flowers and buds.

The protein resides in the vacuole. Its subcellular location is the protein storage vacuole. The enzyme catalyses Hydrolysis of proteins and small molecule substrates at -Asn-|-Xaa- bonds.. Functionally, asparagine-specific endopeptidase involved in the processing of vacuolar seed protein precursors into the mature forms. Probably involved in post-translational proteolysis of seed storage proteins in the protein storage vacuole of developing seeds. The chain is Vacuolar-processing enzyme beta-isozyme from Arabidopsis thaliana (Mouse-ear cress).